The sequence spans 249 residues: Proteasome subunit alpha type-3 (249 aa).

Ser-2 is subject to N-acetylserine. An O-acetylserine mark is found at Ser-214 and Ser-220. A Glycyl lysine isopeptide (Lys-Gly) (interchain with G-Cter in ubiquitin) cross-link involves residue Lys-221.

The protein belongs to the peptidase T1A family. As to quaternary structure, component of the 20S core complex of the 26S proteasome. The 26S proteasome is composed of a core protease (CP), known as the 20S proteasome, capped at one or both ends by the 19S regulatory particle (RP/PA700). The 20S proteasome core is composed of 28 subunits that are arranged in four stacked rings, resulting in a barrel-shaped structure. The two end rings are each formed by seven alpha subunits, and the two central rings are each formed by seven beta subunits. The catalytic chamber with the active sites is on the inside of the barrel. Ubiquitous low levels.

Its subcellular location is the cytoplasm. It is found in the nucleus. In terms of biological role, the proteasome is a multicatalytic proteinase complex which is characterized by its ability to cleave peptides with Arg, Phe, Tyr, Leu, and Glu adjacent to the leaving group at neutral or slightly basic pH. The proteasome has an ATP-dependent proteolytic activity. This Arabidopsis thaliana (Mouse-ear cress) protein is Proteasome subunit alpha type-3 (PAG1).